Here is a 42-residue protein sequence, read N- to C-terminus: Photosystem I reaction center subunit IX (42 aa).

A helical membrane pass occupies residues 7–27; that stretch reads YLSAAPVLSTLWLGALAGLLI.

It belongs to the PsaJ family.

The protein resides in the plastid membrane. In terms of biological role, may help in the organization of the PsaE and PsaF subunits. The sequence is that of Photosystem I reaction center subunit IX from Cuscuta exaltata (Tall dodder).